We begin with the raw amino-acid sequence, 58 residues long: Transactivator protein ORF121 (58 aa).

Functionally, stimulates the expression of 39k gene most probably by increasing IE1 expression. The protein is Transactivator protein ORF121 (AC121) of Lepidoptera (butterflies and moths).